A 204-amino-acid polypeptide reads, in one-letter code: Dephospho-CoA kinase (204 aa).

Residues 13–204 (RIGLTGGIAS…LWKNTIKKLV (192 aa)) form the DPCK domain. 21-26 (ASGKST) lines the ATP pocket.

The protein belongs to the CoaE family.

It is found in the cytoplasm. It catalyses the reaction 3'-dephospho-CoA + ATP = ADP + CoA + H(+). It functions in the pathway cofactor biosynthesis; coenzyme A biosynthesis; CoA from (R)-pantothenate: step 5/5. In terms of biological role, catalyzes the phosphorylation of the 3'-hydroxyl group of dephosphocoenzyme A to form coenzyme A. This Prochlorococcus marinus subsp. pastoris (strain CCMP1986 / NIES-2087 / MED4) protein is Dephospho-CoA kinase.